The primary structure comprises 453 residues: Tol-Pal system protein TolB (453 aa).

An N-terminal signal peptide occupies residues 1–31 (MINNLSVSMTKVLKIILTIIIILFNTLSILA).

The protein belongs to the TolB family. As to quaternary structure, the Tol-Pal system is composed of five core proteins: the inner membrane proteins TolA, TolQ and TolR, the periplasmic protein TolB and the outer membrane protein Pal. They form a network linking the inner and outer membranes and the peptidoglycan layer.

It is found in the periplasm. In terms of biological role, part of the Tol-Pal system, which plays a role in outer membrane invagination during cell division and is important for maintaining outer membrane integrity. This is Tol-Pal system protein TolB from Orientia tsutsugamushi (strain Boryong) (Rickettsia tsutsugamushi).